The chain runs to 268 residues: Testis-specific serine/threonine-protein kinase 3 (268 aa).

Positions 10-265 (YQLGKTIGEG…IEEVSWHPWL (256 aa)) constitute a Protein kinase domain. ATP contacts are provided by residues 16–24 (IGEGTYSKV) and Lys-39. The active-site Proton acceptor is Asp-134. Phosphoserine is present on Ser-166. At Thr-168 the chain carries Phosphothreonine.

It belongs to the protein kinase superfamily. CAMK Ser/Thr protein kinase family. Mg(2+) is required as a cofactor. Mn(2+) serves as cofactor. Autophosphorylated at Ser-166. Phosphorylation at Thr-168 by PDPK1 activates the serine/threonine protein kinase activity.

Its subcellular location is the cell projection. The protein localises to the cilium. It localises to the flagellum. The catalysed reaction is L-seryl-[protein] + ATP = O-phospho-L-seryl-[protein] + ADP + H(+). It catalyses the reaction L-threonyl-[protein] + ATP = O-phospho-L-threonyl-[protein] + ADP + H(+). With respect to regulation, activated by phosphorylation on Thr-168 by PDPK1. Its function is as follows. Serine/threonine protein kinase required for spermatid development and male fertility. This Homo sapiens (Human) protein is Testis-specific serine/threonine-protein kinase 3.